Reading from the N-terminus, the 388-residue chain is MMRFTLPRDIYYGKGSLEQLKNLKGKKAMLVLGGGSMKRFGFVDKVLGYLKEAGIEVKLIEGVEPDPSVETVFKGAELMRQFEPDWIIAMGGGSPIDAAKAMWIFYEHPEKTFDDIKDPFTVPELRNKAKFLAIPSTSGTATEVTAFSVITDYKTEIKYPLADFNITPDVAVVDSELAETMPPKLTAHTGMDALTHAIEAYVATLHSPFTDPLAMQAIEMINEHLFKSYEGDKEAREQMHYAQCLAGMAFSNALLGICHSMAHKTGAVFHIPHGCANAIYLPYVIKFNSKTSLERYAKIAKQISLAGNTNEELVDSLINLVKELNKKMQIPTTLKEYGIHEQEFKNKVDLISERAIGDACTGSNPRQLNKDEMKKIFECVYYGTEVDF.

Belongs to the iron-containing alcohol dehydrogenase family.

Its function is as follows. This enzyme has activity using butanol and ethanol as substrates. The chain is NADPH-dependent butanol dehydrogenase (adh1) from Clostridium saccharobutylicum.